A 230-amino-acid chain; its full sequence is N-(5'-phosphoribosyl)anthranilate isomerase (230 aa).

It belongs to the TrpF family.

The enzyme catalyses N-(5-phospho-beta-D-ribosyl)anthranilate = 1-(2-carboxyphenylamino)-1-deoxy-D-ribulose 5-phosphate. Its pathway is amino-acid biosynthesis; L-tryptophan biosynthesis; L-tryptophan from chorismate: step 3/5. The protein is N-(5'-phosphoribosyl)anthranilate isomerase of Ralstonia nicotianae (strain ATCC BAA-1114 / GMI1000) (Ralstonia solanacearum).